A 277-amino-acid polypeptide reads, in one-letter code: MSGIPFPAIDPVAVELGPIVIRWYALAYLAGFLFGWWYCTRLARAIPGRPTPDDLSEFLTWAIVGVLLGGRLGFVLFYNLDYYIQHPLQALAIWSGGMSFHGGLTGIVAAILLYGWRHGFSPFALGDLVAVAGPVGLFLGRIANFVNGELWGRPAPDLPWAVIFPDPRAGGVPRHPSQLYEAALEGLVLFAVLAWLASKPAVRERTGTLSGTFLVGYGIARILGEVFREPDVQIGYLAFGVTMGQILSVPMVLIGLWILVRAPFGPVRTPAAAAAGR.

Helical transmembrane passes span L16 to W36, F58 to Y78, I93 to L113, and G119 to L139. An a 1,2-diacyl-sn-glycero-3-phospho-(1'-sn-glycerol)-binding site is contributed by R141. 3 helical membrane passes run A182–V202, G207–F227, and F239–L259.

It belongs to the Lgt family.

It is found in the cell inner membrane. It carries out the reaction L-cysteinyl-[prolipoprotein] + a 1,2-diacyl-sn-glycero-3-phospho-(1'-sn-glycerol) = an S-1,2-diacyl-sn-glyceryl-L-cysteinyl-[prolipoprotein] + sn-glycerol 1-phosphate + H(+). The protein operates within protein modification; lipoprotein biosynthesis (diacylglyceryl transfer). Functionally, catalyzes the transfer of the diacylglyceryl group from phosphatidylglycerol to the sulfhydryl group of the N-terminal cysteine of a prolipoprotein, the first step in the formation of mature lipoproteins. This Rhodospirillum centenum (strain ATCC 51521 / SW) protein is Phosphatidylglycerol--prolipoprotein diacylglyceryl transferase.